The primary structure comprises 270 residues: Replication protein A 32 kDa subunit (270 aa).

At Met1 the chain carries N-acetylmethionine. Phosphoserine; by PRKDC is present on residues Ser4 and Ser8. Thr21 carries the post-translational modification Phosphothreonine; by PRKDC. Residues 22–41 (QSPGGFGSPTPSQAEKKSRA) form a disordered region. Ser23 bears the Phosphoserine; by CDK2 mark. Ser29 is subject to Phosphoserine; by CDK1. Ser33 is modified (phosphoserine; by PRKDC). Glycyl lysine isopeptide (Lys-Gly) (interchain with G-Cter in ubiquitin) cross-links involve residues Lys37 and Lys38. The segment at residues 74–148 (VTIVGIIRHA…KSLVAFKIIP (75 aa)) is a DNA-binding region (OB). The interaction with RAD52, TIPIN, UNG and XPA stretch occupies residues 187–270 (GMGEPGNFSG…DDHFKSTDAE (84 aa)).

It belongs to the replication factor A protein 2 family. Component of the replication protein A complex (RPA/RP-A), a heterotrimeric complex composed of RPA1, RPA2 and RPA3. Interacts with PRPF19; the PRP19-CDC5L complex is recruited to the sites of DNA repair where it ubiquitinates the replication protein A complex (RPA). Interacts with SERTAD3. Interacts with TIPIN. Interacts with TIMELESS. Interacts with PPP4R2; the interaction is direct, DNA damage-dependent and mediates the recruitment of the PP4 catalytic subunit PPP4C. Interacts (hyperphosphorylated) with RAD51. Interacts with SMARCAL1; the interaction is direct and mediates the recruitment to the RPA complex of SMARCAL1. Interacts with RAD52 and XPA; those interactions are direct and associate RAD52 and XPA to the RPA complex. Interacts with FBH1. Interacts with ETAA1; the interaction is direct and promotes ETAA1 recruitment at stalled replication forks. Interacts with DDI2. Interacts (in unphosphorylated form via N-terminus) with EIF4EBP3; the interaction enhances EIF4EBP3-mediated inhibition of EIF4E-mediated mRNA nuclear export. Interacts with nuclear UNG (isoform 2); this interaction mediates UNG recruitment to RPA-coated single-stranded DNA at stalled replication forks. Differentially phosphorylated throughout the cell cycle, becoming phosphorylated at the G1-S transition and dephosphorylated in late mitosis. Mainly phosphorylated at Ser-23 and Ser-29, by cyclin A-CDK2 and cyclin B-CDK1, respectively during DNA replication and mitosis. Dephosphorylation may require the serine/threonine-protein phosphatase 4. Phosphorylation at Ser-23 and Ser-29 is a prerequisite for further phosphorylation. Becomes hyperphosphorylated on additional residues including Ser-4, Ser-8, Thr-21 and Ser-33 in response to DNA damage. Hyperphosphorylation is mediated by ATM, ATR and PRKDC. Primarily recruited to DNA repair nuclear foci as a hypophosphorylated form it undergoes subsequent hyperphosphorylation, catalyzed by ATR. Hyperphosphorylation is required for RAD51 recruitment to chromatin and efficient DNA repair. Phosphorylation at Thr-21 depends upon RFWD3 presence. In terms of processing, DNA damage-induced 'Lys-63'-linked polyubiquitination by PRPF19 mediates ATRIP recruitment to the RPA complex at sites of DNA damage and activation of ATR. Ubiquitinated by RFWD3 at stalled replication forks in response to DNA damage: ubiquitination by RFWD3 does not lead to degradation by the proteasome and promotes removal of the RPA complex from stalled replication forks, promoting homologous recombination.

It localises to the nucleus. The protein localises to the PML body. In terms of biological role, as part of the heterotrimeric replication protein A complex (RPA/RP-A), binds and stabilizes single-stranded DNA intermediates, that form during DNA replication or upon DNA stress. It prevents their reannealing and in parallel, recruits and activates different proteins and complexes involved in DNA metabolism. Thereby, it plays an essential role both in DNA replication and the cellular response to DNA damage. In the cellular response to DNA damage, the RPA complex controls DNA repair and DNA damage checkpoint activation. Through recruitment of ATRIP activates the ATR kinase a master regulator of the DNA damage response. It is required for the recruitment of the DNA double-strand break repair factors RAD51 and RAD52 to chromatin in response to DNA damage. Also recruits to sites of DNA damage proteins like XPA and XPG that are involved in nucleotide excision repair and is required for this mechanism of DNA repair. Also plays a role in base excision repair (BER) probably through interaction with UNG. Also recruits SMARCAL1/HARP, which is involved in replication fork restart, to sites of DNA damage. May also play a role in telomere maintenance. The chain is Replication protein A 32 kDa subunit (Rpa2) from Rattus norvegicus (Rat).